Reading from the N-terminus, the 425-residue chain is uncharacterized protein (425 aa).

This is an uncharacterized protein from Acidianus sp. F28 (AFV-2).